Here is a 101-residue protein sequence, read N- to C-terminus: Small ribosomal subunit protein uS14 (101 aa).

The tract at residues 36-61 (ASAEDRRAARQKLQSLPRNSSPVRQR) is disordered. Residues 47-59 (KLQSLPRNSSPVR) show a composition bias toward polar residues.

Belongs to the universal ribosomal protein uS14 family. As to quaternary structure, part of the 30S ribosomal subunit. Contacts proteins S3 and S10.

Its function is as follows. Binds 16S rRNA, required for the assembly of 30S particles and may also be responsible for determining the conformation of the 16S rRNA at the A site. In Methylobacillus flagellatus (strain ATCC 51484 / DSM 6875 / VKM B-1610 / KT), this protein is Small ribosomal subunit protein uS14.